Reading from the N-terminus, the 1041-residue chain is Desmoglein-4 (1041 aa).

The first 23 residues, 1–23, serve as a signal peptide directing secretion; it reads MDWLLFRNICLLILFMVVLGVNS. Positions 24 to 49 are excised as a propeptide; that stretch reads EFIVEVKELDIENGTTTWQTVRRQKR. 4 Cadherin domains span residues 50 to 157, 158 to 269, 270 to 385, and 389 to 497; these read EWIK…PPVF, TQNV…FPIL, EKTS…GPTF, and SMTF…CPVI. The Extracellular portion of the chain corresponds to 50 to 634; sequence EWIKFAAACR…RQSNVGLGPA (585 aa). An N-linked (GlcNAc...) asparagine glycan is attached at N110. Residue N545 is glycosylated (N-linked (GlcNAc...) asparagine). A helical membrane pass occupies residues 635–655; it reads GIGMIILGLLLLLLSPLLLLM. Over 656–1041 the chain is Cytoplasmic; it reads CCCKRRQPEG…RYSNMHYSRQ (386 aa). Desmoglein repeat repeat units lie at residues 884–910 and 911–941; these read TLSE…IVTE and TYTT…ETVM. The disordered stretch occupies residues 1014 to 1041; that stretch reads ISQTTGSTSPMTSQHRVTRYSNMHYSRQ.

Interacts with JUP. Strongly expressed in the skin; during the anagen stage of hair follicles in the matrix, precortex and inner rooth sheath.

It localises to the cell membrane. The protein resides in the cell junction. It is found in the desmosome. Functionally, a component of desmosome cell-cell junctions which are required for positive regulation of cellular adhesion. Coordinates the transition from proliferation to differentiation in hair follicle keratinocytes. Plays a role in moderating lymphocyte migration to inflamed skin and maintaining homeostasis of the epidermal inflammatory response. The chain is Desmoglein-4 (Dsg4) from Mus musculus (Mouse).